The following is a 466-amino-acid chain: 3-isopropylmalate dehydratase large subunit (466 aa).

[4Fe-4S] cluster contacts are provided by C347, C407, and C410.

This sequence belongs to the aconitase/IPM isomerase family. LeuC type 1 subfamily. As to quaternary structure, heterodimer of LeuC and LeuD. Requires [4Fe-4S] cluster as cofactor.

It catalyses the reaction (2R,3S)-3-isopropylmalate = (2S)-2-isopropylmalate. The protein operates within amino-acid biosynthesis; L-leucine biosynthesis; L-leucine from 3-methyl-2-oxobutanoate: step 2/4. Its function is as follows. Catalyzes the isomerization between 2-isopropylmalate and 3-isopropylmalate, via the formation of 2-isopropylmaleate. In Vibrio campbellii (strain ATCC BAA-1116), this protein is 3-isopropylmalate dehydratase large subunit.